The chain runs to 367 residues: Alanine racemase (367 aa).

Residue K40 is the Proton acceptor; specific for D-alanine of the active site. K40 bears the N6-(pyridoxal phosphate)lysine mark. R136 is a binding site for substrate. The active-site Proton acceptor; specific for L-alanine is Y263. M310 contributes to the substrate binding site.

This sequence belongs to the alanine racemase family. Requires pyridoxal 5'-phosphate as cofactor.

The catalysed reaction is L-alanine = D-alanine. It functions in the pathway amino-acid biosynthesis; D-alanine biosynthesis; D-alanine from L-alanine: step 1/1. In terms of biological role, catalyzes the interconversion of L-alanine and D-alanine. May also act on other amino acids. This chain is Alanine racemase (alr), found in Streptococcus thermophilus (strain ATCC BAA-250 / LMG 18311).